Here is a 236-residue protein sequence, read N- to C-terminus: Uridylate kinase (236 aa).

Residue 10–13 coordinates ATP; sequence KLSG. Residues 18-23 form an involved in allosteric activation by GTP region; the sequence is GEDGYG. Gly52 serves as a coordination point for UMP. Residues Gly53 and Arg57 each contribute to the ATP site. Residues Asp72 and 133-140 contribute to the UMP site; that span reads TGNPYFTT. Residues Thr160, Tyr166, and Asp169 each contribute to the ATP site.

Belongs to the UMP kinase family. As to quaternary structure, homohexamer.

Its subcellular location is the cytoplasm. The enzyme catalyses UMP + ATP = UDP + ADP. It participates in pyrimidine metabolism; CTP biosynthesis via de novo pathway; UDP from UMP (UMPK route): step 1/1. Allosterically activated by GTP. Inhibited by UTP. Catalyzes the reversible phosphorylation of UMP to UDP. In Chlorobium phaeobacteroides (strain DSM 266 / SMG 266 / 2430), this protein is Uridylate kinase.